The primary structure comprises 209 residues: Uracil phosphoribosyltransferase (209 aa).

Residues Arg-79, Arg-104, and Asp-131–Thr-139 each bind 5-phospho-alpha-D-ribose 1-diphosphate. Uracil contacts are provided by residues Ile-194 and Gly-199–Ala-201. Residue Asp-200 coordinates 5-phospho-alpha-D-ribose 1-diphosphate.

The protein belongs to the UPRTase family. Mg(2+) serves as cofactor.

It catalyses the reaction UMP + diphosphate = 5-phospho-alpha-D-ribose 1-diphosphate + uracil. The protein operates within pyrimidine metabolism; UMP biosynthesis via salvage pathway; UMP from uracil: step 1/1. Allosterically activated by GTP. Functionally, catalyzes the conversion of uracil and 5-phospho-alpha-D-ribose 1-diphosphate (PRPP) to UMP and diphosphate. This Pseudoalteromonas atlantica (strain T6c / ATCC BAA-1087) protein is Uracil phosphoribosyltransferase.